The sequence spans 428 residues: Tyrosine--tRNA ligase (428 aa).

Tyrosine 36 is an L-tyrosine binding site. Residues 41–50 carry the 'HIGH' region motif; that stretch reads PTAPSLHAGH. The L-tyrosine site is built by tyrosine 171 and glutamine 175. Residues 231–235 carry the 'KMSKS' region motif; sequence KFGKS. Position 234 (lysine 234) interacts with ATP. Residues 359-416 form the S4 RNA-binding domain; the sequence is DSIVDLLVETGLAASKGAARRNVAEGGVYVNNIRIESDEWIPQHSDFLHERWLVLRRG.

Belongs to the class-I aminoacyl-tRNA synthetase family. TyrS type 1 subfamily. Homodimer.

The protein localises to the cytoplasm. It catalyses the reaction tRNA(Tyr) + L-tyrosine + ATP = L-tyrosyl-tRNA(Tyr) + AMP + diphosphate + H(+). Functionally, catalyzes the attachment of tyrosine to tRNA(Tyr) in a two-step reaction: tyrosine is first activated by ATP to form Tyr-AMP and then transferred to the acceptor end of tRNA(Tyr). The protein is Tyrosine--tRNA ligase of Mycolicibacterium fortuitum (Mycobacterium fortuitum).